We begin with the raw amino-acid sequence, 31 residues long: Cytochrome b6-f complex subunit 6 (31 aa).

The chain crosses the membrane as a helical span at residues 4 to 24; the sequence is ITSYFGFLLAALTLTLALFIG.

This sequence belongs to the PetL family. In terms of assembly, the 4 large subunits of the cytochrome b6-f complex are cytochrome b6, subunit IV (17 kDa polypeptide, PetD), cytochrome f and the Rieske protein, while the 4 small subunits are PetG, PetL, PetM and PetN. The complex functions as a dimer.

Its subcellular location is the plastid. It is found in the chloroplast thylakoid membrane. Functionally, component of the cytochrome b6-f complex, which mediates electron transfer between photosystem II (PSII) and photosystem I (PSI), cyclic electron flow around PSI, and state transitions. PetL is important for photoautotrophic growth as well as for electron transfer efficiency and stability of the cytochrome b6-f complex. The polypeptide is Cytochrome b6-f complex subunit 6 (Oryza sativa subsp. japonica (Rice)).